The sequence spans 427 residues: Enolase (427 aa).

Gln-164 contributes to the (2R)-2-phosphoglycerate binding site. Glu-206 serves as the catalytic Proton donor. The Mg(2+) site is built by Asp-243, Glu-284, and Asp-311. The (2R)-2-phosphoglycerate site is built by Lys-336, Arg-365, Ser-366, and Lys-387. Lys-336 functions as the Proton acceptor in the catalytic mechanism.

It belongs to the enolase family. Mg(2+) is required as a cofactor.

Its subcellular location is the cytoplasm. It is found in the secreted. It localises to the cell surface. It catalyses the reaction (2R)-2-phosphoglycerate = phosphoenolpyruvate + H2O. It participates in carbohydrate degradation; glycolysis; pyruvate from D-glyceraldehyde 3-phosphate: step 4/5. In terms of biological role, catalyzes the reversible conversion of 2-phosphoglycerate (2-PG) into phosphoenolpyruvate (PEP). It is essential for the degradation of carbohydrates via glycolysis. This Synechococcus sp. (strain JA-2-3B'a(2-13)) (Cyanobacteria bacterium Yellowstone B-Prime) protein is Enolase.